Here is a 111-residue protein sequence, read N- to C-terminus: Complement inhibitor CirpT1 (111 aa).

The signal sequence occupies residues 1–19; the sequence is MATLIAARTKRKAPRVRIF. Intrachain disulfides connect Cys40/Cys64, Cys59/Cys98, Cys76/Cys99, and Cys85/Cys104.

Belongs to the CirpT family. As to expression, expressed in salivary glands.

It is found in the secreted. Complement inhibitor. Prevents complement-mediated activation of C5 by sterically preventing direct binding of C5 to its convertase (binding with domains MG4 and MG5). Binds C5 at a different binding site than the other tick complement inhibitors OmCI and RaCI3, and the drug eculizumab. Inhibits the complement in human, rat and guinea pig, and also shows a reduced inhibition in rabbit and pig. The sequence is that of Complement inhibitor CirpT1 from Rhipicephalus pulchellus (Yellow backed tick).